The chain runs to 409 residues: UV excision repair protein RAD23 homolog B (409 aa).

In terms of domain architecture, Ubiquitin-like spans 1–79 (MQVTLKTLQQ…VVVMVTKPKA (79 aa)). Positions 80–175 (VSTPAPATTQ…STSGDSSRSN (96 aa)) are disordered. The segment covering 81 to 143 (STPAPATTQQ…SSEPAPASAA (63 aa)) has biased composition (low complexity). The span at 144–153 (KQEKPAEKPA) shows a compositional bias: basic and acidic residues. T155 is modified (phosphothreonine). The residue at position 160 (S160) is a Phosphoserine. Residues 160–175 (SPTATDSTSGDSSRSN) show a composition bias toward polar residues. Phosphothreonine is present on T164. S174 is subject to Phosphoserine. T186 is subject to Phosphothreonine. The 41-residue stretch at 188-228 (QSYENMVTEIMSMGYEREQVIAALRASFNNPDRAVEYLLMG) folds into the UBA 1 domain. Position 199 is a phosphoserine (S199). Residue Y202 is modified to Phosphotyrosine. The interval 236-276 (QAVVDPPQAASTGAPQSSAVAAAAATTTATTTTTSSGGHPL) is disordered. Low complexity predominate over residues 252–271 (SSAVAAAAATTTATTTTTSS). The STI1 domain maps to 274-317 (HPLEFLRNQPQFQQMRQIIQQNPSLLPALLQQIGRENPQLLQQI). Residues 364–404 (PQEKEAIERLKALGFPEGLVIQAYFACEKNENLAANFLLQQ) form the UBA 2 domain.

It belongs to the RAD23 family. Component of the XPC complex composed of XPC, RAD23B and CETN2. Interacts with NGLY1 and PSMC1. Interacts with ATXN3. Interacts with PSMD4 and PSMC5. Interacts with AMFR. Interacts with VCP; the interaction is indirect and mediated by NGLY1.

It localises to the nucleus. It is found in the cytoplasm. Multiubiquitin chain receptor involved in modulation of proteasomal degradation. Binds to polyubiquitin chains. Proposed to be capable to bind simultaneously to the 26S proteasome and to polyubiquitinated substrates and to deliver ubiquitinated proteins to the proteasome. May play a role in endoplasmic reticulum-associated degradation (ERAD) of misfolded glycoproteins by association with PNGase and delivering deglycosylated proteins to the proteasome. Functionally, involved in global genome nucleotide excision repair (GG-NER) by acting as component of the XPC complex. Cooperatively with CETN2 appears to stabilize XPC. May protect XPC from proteasomal degradation. In terms of biological role, the XPC complex is proposed to represent the first factor bound at the sites of DNA damage and together with other core recognition factors, XPA, RPA and the TFIIH complex, is part of the pre-incision (or initial recognition) complex. The XPC complex recognizes a wide spectrum of damaged DNA characterized by distortions of the DNA helix such as single-stranded loops, mismatched bubbles or single-stranded overhangs. The orientation of XPC complex binding appears to be crucial for inducing a productive NER. XPC complex is proposed to recognize and to interact with unpaired bases on the undamaged DNA strand which is followed by recruitment of the TFIIH complex and subsequent scanning for lesions in the opposite strand in a 5'-to-3' direction by the NER machinery. Cyclobutane pyrimidine dimers (CPDs) which are formed upon UV-induced DNA damage esacpe detection by the XPC complex due to a low degree of structural perurbation. Instead they are detected by the UV-DDB complex which in turn recruits and cooperates with the XPC complex in the respective DNA repair. In vitro, the XPC:RAD23B dimer is sufficient to initiate NER; it preferentially binds to cisplatin and UV-damaged double-stranded DNA and also binds to a variety of chemically and structurally diverse DNA adducts. XPC:RAD23B contacts DNA both 5' and 3' of a cisplatin lesion with a preference for the 5' side. XPC:RAD23B induces a bend in DNA upon binding. XPC:RAD23B stimulates the activity of DNA glycosylases TDG and SMUG1. The sequence is that of UV excision repair protein RAD23 homolog B (RAD23B) from Homo sapiens (Human).